A 291-amino-acid polypeptide reads, in one-letter code: Protease HtpX homolog (291 aa).

2 consecutive transmembrane segments (helical) span residues Val-4–Ile-24 and Met-38–Leu-58. Position 144 (His-144) interacts with Zn(2+). Glu-145 is an active-site residue. His-148 serves as a coordination point for Zn(2+). The next 2 membrane-spanning stretches (helical) occupy residues Leu-159–Val-179 and Ile-199–Phe-219. Glu-224 is a Zn(2+) binding site.

It belongs to the peptidase M48B family. It depends on Zn(2+) as a cofactor.

The protein localises to the cell inner membrane. This chain is Protease HtpX homolog, found in Pelodictyon phaeoclathratiforme (strain DSM 5477 / BU-1).